A 260-amino-acid chain; its full sequence is Pyridoxine 5'-phosphate synthase (260 aa).

Residues Asn10 and Arg21 each coordinate 3-amino-2-oxopropyl phosphate. Catalysis depends on His46, which acts as the Proton acceptor. Arg48 and His53 together coordinate 1-deoxy-D-xylulose 5-phosphate. Glu76 functions as the Proton acceptor in the catalytic mechanism. Thr113 lines the 1-deoxy-D-xylulose 5-phosphate pocket. The active-site Proton donor is His204. 3-amino-2-oxopropyl phosphate is bound by residues Asp205 and 227–228; that span reads GH.

The protein belongs to the PNP synthase family. In terms of assembly, homooctamer; tetramer of dimers.

Its subcellular location is the cytoplasm. It catalyses the reaction 3-amino-2-oxopropyl phosphate + 1-deoxy-D-xylulose 5-phosphate = pyridoxine 5'-phosphate + phosphate + 2 H2O + H(+). It participates in cofactor biosynthesis; pyridoxine 5'-phosphate biosynthesis; pyridoxine 5'-phosphate from D-erythrose 4-phosphate: step 5/5. Catalyzes the complicated ring closure reaction between the two acyclic compounds 1-deoxy-D-xylulose-5-phosphate (DXP) and 3-amino-2-oxopropyl phosphate (1-amino-acetone-3-phosphate or AAP) to form pyridoxine 5'-phosphate (PNP) and inorganic phosphate. The protein is Pyridoxine 5'-phosphate synthase of Xylella fastidiosa (strain M23).